The sequence spans 216 residues: Ribonuclease HII (216 aa).

The 189-residue stretch at 28–216 (ACIAGIDEAG…GVKEYVRSEE (189 aa)) folds into the RNase H type-2 domain. A divalent metal cation-binding residues include aspartate 34, glutamate 35, and aspartate 126.

This sequence belongs to the RNase HII family. The cofactor is Mn(2+). Mg(2+) is required as a cofactor.

The protein resides in the cytoplasm. It carries out the reaction Endonucleolytic cleavage to 5'-phosphomonoester.. Endonuclease that specifically degrades the RNA of RNA-DNA hybrids. This is Ribonuclease HII from Geotalea uraniireducens (strain Rf4) (Geobacter uraniireducens).